The chain runs to 612 residues: RNA polymerase sigma factor RpoD (612 aa).

Over residues 191 to 206 (QQNNEEDEENNQEDHE) the composition is skewed to acidic residues. The tract at residues 191–210 (QQNNEEDEENNQEDHEDDHS) is disordered. The sigma-70 factor domain-2 stretch occupies residues 378-448 (MVEANLRLVI…TRSIADQART (71 aa)). An Interaction with polymerase core subunit RpoC motif is present at residues 402 to 405 (DLIQ). A sigma-70 factor domain-3 region spans residues 457–533 (ETINKLNRIS…DTTLELPLDS (77 aa)). The interval 546–599 (VLSGLTAREAKVLRMRFGIDMNTDHTLEEVGKQFDVTRERIRQIEAKALRKLRH) is sigma-70 factor domain-4. The segment at residues 572 to 591 (LEEVGKQFDVTRERIRQIEA) is a DNA-binding region (H-T-H motif).

This sequence belongs to the sigma-70 factor family. RpoD/SigA subfamily. As to quaternary structure, interacts transiently with the RNA polymerase catalytic core.

It localises to the cytoplasm. In terms of biological role, sigma factors are initiation factors that promote the attachment of RNA polymerase to specific initiation sites and are then released. This sigma factor is the primary sigma factor during exponential growth. The chain is RNA polymerase sigma factor RpoD from Buchnera aphidicola subsp. Acyrthosiphon pisum (strain APS) (Acyrthosiphon pisum symbiotic bacterium).